A 938-amino-acid polypeptide reads, in one-letter code: MVGSVVEAHRQSVGCLRNLSQLLAWASNTSGGLIFYSREDDVLTSTRISYAELLADAGEKARLIGQITGLSSESIILLHFDTQREVIEWFWAATLAGYLPAISTPFVDDTARRKAHLLHLHAQLNQPVVLTSKRLVPEFLGLEELRLHDVESLLSSAAKDGLIQYLGVQKLAEDVAVLMLTSGSTGSAKAVPLRHGQLLTAIQGKSTHHGTLPGDVFYNWVGLDHVASLTEIHLHALILGSDQVHTAASELLRNSLQFVRLLDTHKVAYTFAPNFFLTKVLDSLRENPTFTADLSSLKALISGGESNVVVTCDKLTRELRRRGVQAEVIRPGFGMTETCAGSIYSRACPSYDIRQSLEFASLGSCIPGMHMRIMSITEPGKLAAPGESGELQVAGPVVFDHYYNDETATRNAFTPDGWFITGDLGWIDDAGNLNLAGRTKDTIIVNGVKWSSTELEAAIEEEAVSGLVRSFTVVVPTRPPGSATEEIAVVYSPAYAPEDYHARYETAQVISKTVSLLTGTKPARLIPLPQSLLEKSSLGKISHSKVRAALESGEYASIERADQLILAQYRQFKWRPAKSDSERAVQKALVEFLQVPAEGINMDDSIYDLGVSSLNLILLRSTLQRMLDPKIDIPLSIILNNPTPGAIARSIDSSRSSLAGYNAIVPLQQHRHGGTPLFCIHPGSGEVLVFVALAAHFPTRPVYALRTRGYGSNEQLFGSIEETVETYATQIRQVQPHGPYAIAGYSLGSTLAFEVAKVLEAQGEEVKFLASIDYPPHIAHYVRDLNWTDVLLHIAFFLELIDEKTMVEVTPYLHTLDRQTALTHILNIGDAERARALAIDTKHLGLISDIAENFRVNVKTYKPQGKVQHLDVFVADPPTYAARDRKDWRENKLGRWVDFCETKVEFHDCPGIHAKMLNREHIAGFAKVFKAAMRRRGV.

Positions 44-445 (TSTRISYAEL…AGRTKDTIIV (402 aa)) are adenylation (A) domain. Residues 579–655 (SDSERAVQKA…AIARSIDSSR (77 aa)) enclose the Carrier domain. The interval 581 to 652 (SERAVQKALV…TPGAIARSID (72 aa)) is thiolation and peptide carrier (T) domain. S613 is modified (O-(pantetheine 4'-phosphoryl)serine). The segment at 676–923 (PLFCIHPGSG…AKMLNREHIA (248 aa)) is thioesterase (TE) domain. S746 is a catalytic residue.

This sequence belongs to the ATP-dependent AMP-binding enzyme family.

The protein operates within secondary metabolite biosynthesis. In terms of biological role, microperfuranone synthase is the only protein required for the biosynthesis of the secondary metabolite microperfuranone from phenylpyruvic acid (PPA). Several steps for the microperfuranione biosynthesis have been proposed. These steps include the activation of PPA, by the micA adenylation (A) domain to AMP-phenylpyruvic acid followed by loading of the PPA unit to the thiolation and peptide carrier (T) domain and eventually transferring to the thioesterase (TE) domain. After loading another PPA unit onto the T domain, aldol condensation establishes the carbon-carbon bond between the alpha- and beta-carbon of the two PPA units. Sulfur-assisted furan ring formation, TE domain mediated hydrolysis, decarboxylation, and keto-enol tautomerization would generate microperfuranone attached to the T domain. Finally, microperfuranone is released by the TE domain. The chain is Microperfuranone synthase from Emericella nidulans (strain FGSC A4 / ATCC 38163 / CBS 112.46 / NRRL 194 / M139) (Aspergillus nidulans).